The sequence spans 316 residues: Ribosomal RNA small subunit methyltransferase H (316 aa).

S-adenosyl-L-methionine contacts are provided by residues 35–37 (SGH), Asp55, Phe84, Asp105, and Gln112.

It belongs to the methyltransferase superfamily. RsmH family.

The protein resides in the cytoplasm. The enzyme catalyses cytidine(1402) in 16S rRNA + S-adenosyl-L-methionine = N(4)-methylcytidine(1402) in 16S rRNA + S-adenosyl-L-homocysteine + H(+). Its function is as follows. Specifically methylates the N4 position of cytidine in position 1402 (C1402) of 16S rRNA. In Streptococcus pyogenes serotype M6 (strain ATCC BAA-946 / MGAS10394), this protein is Ribosomal RNA small subunit methyltransferase H.